We begin with the raw amino-acid sequence, 143 residues long: Large ribosomal subunit protein uL16c (143 aa).

It belongs to the universal ribosomal protein uL16 family. In terms of assembly, part of the 50S ribosomal subunit.

The protein resides in the plastid. It is found in the chloroplast. The protein is Large ribosomal subunit protein uL16c of Chlorokybus atmophyticus (Soil alga).